The following is a 313-amino-acid chain: Cytochrome f (313 aa).

The first 31 residues, 1 to 31 (MQNMFSFLSNKKIIALFLIIGTIFMPLSSEA), serve as a signal peptide directing secretion. Residues Y32, C52, C55, and H56 each coordinate heme. A helical transmembrane segment spans residues 279–298 (IKWLIAFLILSTLGQVFLVL).

Belongs to the cytochrome f family. In terms of assembly, the 4 large subunits of the cytochrome b6-f complex are cytochrome b6, subunit IV (17 kDa polypeptide, petD), cytochrome f and the Rieske protein, while the 4 small subunits are PetG, PetL, PetM and PetN. The complex functions as a dimer. Heme serves as cofactor.

Its subcellular location is the plastid. It is found in the chloroplast thylakoid membrane. Functionally, component of the cytochrome b6-f complex, which mediates electron transfer between photosystem II (PSII) and photosystem I (PSI), cyclic electron flow around PSI, and state transitions. In Mesostigma viride (Green alga), this protein is Cytochrome f (petA).